The primary structure comprises 286 residues: NAD kinase (286 aa).

Residue aspartate 74 is the Proton acceptor of the active site. Residues aspartate 74–glycine 75, asparagine 148–aspartate 149, aspartate 178, alanine 186, threonine 189–serine 194, and glutamine 244 each bind NAD(+).

The protein belongs to the NAD kinase family. Requires a divalent metal cation as cofactor.

Its subcellular location is the cytoplasm. It carries out the reaction NAD(+) + ATP = ADP + NADP(+) + H(+). Involved in the regulation of the intracellular balance of NAD and NADP, and is a key enzyme in the biosynthesis of NADP. Catalyzes specifically the phosphorylation on 2'-hydroxyl of the adenosine moiety of NAD to yield NADP. The sequence is that of NAD kinase from Campylobacter jejuni subsp. doylei (strain ATCC BAA-1458 / RM4099 / 269.97).